The primary structure comprises 288 residues: MLTLRDRIRQELHVRPEIDPGAEVERRVAFLAKYLQHTPARGFVLGISGGQDSTLAGRLSQLAAERVRAEGGDATFFAVRLPYGVQADEADAQTALGFIRPDRTLTVNIKAAVDASARAVAEALGTGLHNAPQPETTPHDPLRDFVRGNIKARERMVAQYAIAGQENLLVVGTDHAAEALTGFFTKYGDGGVDLTPLTGLTKRQGAQLLAFLGAPESTWRKVPTADLEDDRPGLPDEVALGVTYAQIDAYLEGRAVSPEVAARLERLYLATRHKRALPVTPFDHWWQA.

46–53 (GISGGQDS) serves as a coordination point for ATP. A Mg(2+)-binding site is contributed by Asp52. A deamido-NAD(+)-binding site is contributed by Arg153. ATP is bound at residue Thr173. A Mg(2+)-binding site is contributed by Glu178. Positions 186 and 193 each coordinate deamido-NAD(+). ATP contacts are provided by Lys202 and Thr224. 273–274 (HK) contributes to the deamido-NAD(+) binding site.

This sequence belongs to the NAD synthetase family. Homodimer.

The enzyme catalyses deamido-NAD(+) + NH4(+) + ATP = AMP + diphosphate + NAD(+) + H(+). It participates in cofactor biosynthesis; NAD(+) biosynthesis; NAD(+) from deamido-NAD(+) (ammonia route): step 1/1. Its function is as follows. Catalyzes the ATP-dependent amidation of deamido-NAD to form NAD. Uses ammonia as a nitrogen source. The chain is NH(3)-dependent NAD(+) synthetase from Deinococcus geothermalis (strain DSM 11300 / CIP 105573 / AG-3a).